The chain runs to 334 residues: Putative 2-hydroxyacid dehydrogenase UNK4.10 (334 aa).

NAD(+) contacts are provided by residues glycine 166–isoleucine 167, threonine 244–arginine 246, and aspartate 270. The active site involves arginine 246. Residue glutamate 275 is part of the active site. Catalysis depends on histidine 293, which acts as the Proton donor. Histidine 293–threonine 296 contributes to the NAD(+) binding site.

It belongs to the D-isomer specific 2-hydroxyacid dehydrogenase family.

The polypeptide is Putative 2-hydroxyacid dehydrogenase UNK4.10 (Schizosaccharomyces pombe (strain 972 / ATCC 24843) (Fission yeast)).